The following is a 174-amino-acid chain: ATP-dependent protease subunit HslV (174 aa).

T2 is an active-site residue. Na(+)-binding residues include A156, C159, and T162.

It belongs to the peptidase T1B family. HslV subfamily. As to quaternary structure, a double ring-shaped homohexamer of HslV is capped on each side by a ring-shaped HslU homohexamer. The assembly of the HslU/HslV complex is dependent on binding of ATP.

It is found in the cytoplasm. The enzyme catalyses ATP-dependent cleavage of peptide bonds with broad specificity.. Allosterically activated by HslU binding. In terms of biological role, protease subunit of a proteasome-like degradation complex believed to be a general protein degrading machinery. The chain is ATP-dependent protease subunit HslV from Agrobacterium fabrum (strain C58 / ATCC 33970) (Agrobacterium tumefaciens (strain C58)).